We begin with the raw amino-acid sequence, 415 residues long: Gamma-glutamyl phosphate reductase (415 aa).

It belongs to the gamma-glutamyl phosphate reductase family.

Its subcellular location is the cytoplasm. It catalyses the reaction L-glutamate 5-semialdehyde + phosphate + NADP(+) = L-glutamyl 5-phosphate + NADPH + H(+). It functions in the pathway amino-acid biosynthesis; L-proline biosynthesis; L-glutamate 5-semialdehyde from L-glutamate: step 2/2. Catalyzes the NADPH-dependent reduction of L-glutamate 5-phosphate into L-glutamate 5-semialdehyde and phosphate. The product spontaneously undergoes cyclization to form 1-pyrroline-5-carboxylate. The sequence is that of Gamma-glutamyl phosphate reductase from Pseudoalteromonas translucida (strain TAC 125).